A 141-amino-acid polypeptide reads, in one-letter code: Antifungal protein ginkbilobin-like protein 1 (141 aa).

Residues Met1–Ala32 form the signal peptide. Residues Thr36–Phe141 enclose the Gnk2-homologous domain. Intrachain disulfides connect Cys43–Cys119, Cys95–Cys104, and Cys107–Cys132. Asn44 provides a ligand contact to alpha-D-mannopyranose. Residues Arg126 and Glu137 each contribute to the alpha-D-mannopyranose site.

Exerts antifungal activity through its carbohydrate-binding specificity. The chain is Antifungal protein ginkbilobin-like protein 1 from Picea glauca (White spruce).